The primary structure comprises 810 residues: Interleukin-4 receptor subunit alpha (810 aa).

Positions 1 to 25 (MGRLCTKFLTSVGCLILLLVTGSGS) are cleaved as a signal peptide. The Extracellular segment spans residues 26-233 (IKVLGEPTCF…NHFQLPLIQR (208 aa)). Cysteines 34 and 44 form a disulfide. Residue asparagine 72 is glycosylated (N-linked (GlcNAc...) asparagine). A disulfide bridge links cysteine 75 with cysteine 87. The Fibronectin type-III domain maps to 126–224 (APDNLTLHTN…EWSPSITWYN (99 aa)). Asparagine 129, asparagine 135, and asparagine 163 each carry an N-linked (GlcNAc...) asparagine glycan. A Phosphoserine modification is found at serine 165. The WSXWS motif signature appears at 213–217 (WSEWS). Residues 234–257 (LPLGVTISCLCIPLFCLFCYFSIT) form a helical membrane-spanning segment. Residues 258 to 810 (KIKKIWWDQI…PVGALGIAVS (553 aa)) are Cytoplasmic-facing. Positions 263–271 (WWDQIPTPA) match the Box 1 motif motif. Positions 441–557 (GSGQASVSWA…ESWEQILHMS (117 aa)) are required for IRS1 activation and IL4-induced cell growth. The tract at residues 460 to 482 (ATCQVTEQPSHPGPLSGSPAQSA) is disordered. The residue at position 500 (tyrosine 500) is a Phosphotyrosine. Residues 510–546 (APNPGELAPEQQQADHLEEEEPPSPADPHSSGPPMQP) are disordered. Positions 557-653 (SVLQHGAAAG…SSVPLFTFGL (97 aa)) are required for IL4-induced gene expression. Residues tyrosine 575, tyrosine 603, and tyrosine 631 each carry the phosphotyrosine modification. A disordered region spans residues 586–672 (AAQDPGVPGV…NSDPPKSPPE (87 aa)). Over residues 635-647 (QNPVPNQSPSSVP) the composition is skewed to low complexity. The short motif at 707–712 (IVYSSL) is the ITIM motif element. The segment at 766–810 (PPEANLMSAPKTPSNLSGEGKGPGHSPVPSQTTEVPVGALGIAVS) is disordered.

The protein belongs to the type I cytokine receptor family. Type 4 subfamily. As to quaternary structure, the functional IL4 receptor is formed by initial binding of IL4 to IL4R. Subsequent recruitment to the complex of the common gamma chain, in immune cells, creates a type I receptor and, in non-immune cells, of IL13RA1 forms a type II receptor. IL4R can also interact with the IL13/IL13RA1 complex to form a similar type II receptor. Interacts with the SH2-containing phosphatases, PTPN6/SHIP1, PTPN11/SHIP2 and INPP5D/SHIP. Interacts with JAK3. Interacts with PIK3C3. Interacts with JAK1 through a Box 1-containing region; inhibited by SOCS5. Interacts with SOCS5; inhibits IL4 signaling. Interacts with CLM1. Interacts with IL13RA2. On IL4 binding, phosphorylated on C-terminal tyrosine residues. Post-translationally, soluble IL4R can also be produced by proteolytic cleavage at the cell surface (shedding). In terms of tissue distribution, expressed in both Th1 and Th2 cells.

Its subcellular location is the cell membrane. It localises to the secreted. In terms of biological role, receptor for both interleukin 4 and interleukin 13. Couples to the JAK1/2/3-STAT6 pathway. The IL4 response is involved in promoting Th2 differentiation. The IL4/IL13 responses are involved in regulating IgE production and, chemokine and mucus production at sites of allergic inflammation. In certain cell types, can signal through activation of insulin receptor substrates, IRS1/IRS2. The sequence is that of Interleukin-4 receptor subunit alpha (Il4r) from Mus musculus (Mouse).